Consider the following 854-residue polypeptide: Putative Tricorn-like protease C-terminal subunit (854 aa).

The active-site Charge relay system is His-539. The PDZ-like stretch occupies residues 554–646 (PIGGLGADYE…RVTVKLLKDE (93 aa)). Gly-709 is a substrate binding site. Ser-756 functions as the Nucleophile in the catalytic mechanism. The Charge relay system role is filled by Glu-814.

This sequence belongs to the peptidase S41B family.

Its subcellular location is the cytoplasm. In terms of biological role, degrades oligopeptides in a sequential manner. The polypeptide is Putative Tricorn-like protease C-terminal subunit (triC) (Sulfurisphaera tokodaii (strain DSM 16993 / JCM 10545 / NBRC 100140 / 7) (Sulfolobus tokodaii)).